The following is a 360-amino-acid chain: Transmembrane protein 198 (360 aa).

7 consecutive transmembrane segments (helical) span residues alanine 36–glycine 56, cysteine 59–leucine 79, glycine 93–valine 113, valine 116–glycine 136, serine 145–leucine 165, alanine 177–leucine 197, and tryptophan 218–valine 238. 2 disordered regions span residues methionine 260–proline 304 and arginine 324–valine 360. Positions arginine 286–proline 296 are enriched in pro residues. Polar residues predominate over residues threonine 326–alanine 335.

Belongs to the TMEM198 family. In terms of assembly, interacts with LRP6.

The protein localises to the membrane. The protein resides in the cell membrane. It is found in the cytoplasmic vesicle. Promotes LRP6 phosphorylation by casein kinases and thereby plays a role in Wnt signaling. May be a membrane scaffold protein involved in the self-aggregation of LRP6 to further enhance its activity. The chain is Transmembrane protein 198 (TMEM198) from Homo sapiens (Human).